The primary structure comprises 628 residues: Protein SDS23 (628 aa).

The tract at residues 1–126 is disordered; that stretch reads MVNPPQPRQM…NKSSSQSIAP (126 aa). The span at 15-24 shows a compositional bias: polar residues; the sequence is RLSTSTSSGP. Low complexity-rich tracts occupy residues 40 to 71 and 109 to 123; these read QLQH…PGST and SRHA…SSQS. CBS domains follow at residues 258-319 and 334-392; these read LHPK…RFPS and GSSN…SHLL. Residues 551-609 form a disordered region; it reads GRRTDPQAARNQRRRSSTSTTRSSIDSALSAEGILPSGSAIIGSSNAANTGRRGSVEVS. Over residues 587-599 the composition is skewed to low complexity; that stretch reads SGSAIIGSSNAAN.

This sequence belongs to the SDS23 family.

It localises to the cytoplasm. The protein resides in the nucleus. Involved in DNA replication and cell separation. In Candida albicans (strain SC5314 / ATCC MYA-2876) (Yeast), this protein is Protein SDS23 (SDS24).